Consider the following 185-residue polypeptide: Large ribosomal subunit protein uL5 (185 aa).

The protein belongs to the universal ribosomal protein uL5 family. In terms of assembly, part of the 50S ribosomal subunit; part of the 5S rRNA/L5/L18/L25 subcomplex. Contacts the 5S rRNA and the P site tRNA. Forms a bridge to the 30S subunit in the 70S ribosome.

In terms of biological role, this is one of the proteins that bind and probably mediate the attachment of the 5S RNA into the large ribosomal subunit, where it forms part of the central protuberance. In the 70S ribosome it contacts protein S13 of the 30S subunit (bridge B1b), connecting the 2 subunits; this bridge is implicated in subunit movement. Contacts the P site tRNA; the 5S rRNA and some of its associated proteins might help stabilize positioning of ribosome-bound tRNAs. This is Large ribosomal subunit protein uL5 from Rhizobium rhizogenes (strain K84 / ATCC BAA-868) (Agrobacterium radiobacter).